Reading from the N-terminus, the 431-residue chain is Adenylosuccinate synthetase (431 aa).

Residues 12–18 and 40–42 contribute to the GTP site; these read GDEGKGK and GHT. The Proton acceptor role is filled by aspartate 13. Positions 13 and 40 each coordinate Mg(2+). IMP is bound by residues 13–16, 38–41, threonine 130, arginine 144, glutamine 225, threonine 240, and arginine 304; these read DEGK and NAGH. Residue histidine 41 is the Proton donor of the active site. Residue 300–306 coordinates substrate; the sequence is ATTGRPR. GTP contacts are provided by residues arginine 306, 332-334, and 414-416; these read KLD and SVG.

It belongs to the adenylosuccinate synthetase family. Homodimer. Mg(2+) serves as cofactor.

The protein resides in the cytoplasm. The catalysed reaction is IMP + L-aspartate + GTP = N(6)-(1,2-dicarboxyethyl)-AMP + GDP + phosphate + 2 H(+). The protein operates within purine metabolism; AMP biosynthesis via de novo pathway; AMP from IMP: step 1/2. In terms of biological role, plays an important role in the de novo pathway of purine nucleotide biosynthesis. Catalyzes the first committed step in the biosynthesis of AMP from IMP. The protein is Adenylosuccinate synthetase of Geotalea daltonii (strain DSM 22248 / JCM 15807 / FRC-32) (Geobacter daltonii).